A 355-amino-acid polypeptide reads, in one-letter code: MKITFSPELSIPCEVCKNQSNGYHFEVLSCGACASFFRRSVVSKIKYQCKDGKKRCQIRYLDRHFCRYCRFSKCVKAGMKAEKIQKNRDLDSSPTPTDQNNCIPSDVLHDDGILIKDIRGLFKQFNPHNASEGCSKLEKLTEGLQFIRRNQERECIKIIDEMDSESLKDVQFKVIGSCATWLLFSSFFQKLEENEKVVILERLWHGWTVLEFLSRSLEIFGNKVIDEKIVFISDNTAIRLITAFENSLKTASPKKSESIKKKLELSFSVIFDELALHFINWKPTEIEISYMQWQIVWSVAEQLLSGNSLEKGEHFTEQLSKDLHEYYVRELKLENYAFRIEKMMDIVQIVQNNFY.

The segment at residues 10–86 is a DNA-binding region (nuclear receptor); it reads SIPCEVCKNQ…AGMKAEKIQK (77 aa). NR C4-type zinc fingers lie at residues 13 to 33 and 49 to 69; these read CEVC…CGAC and CKDG…CRYC. Residues 126–355 enclose the NR LBD domain; sequence NPHNASEGCS…IVQIVQNNFY (230 aa).

This sequence belongs to the nuclear hormone receptor family.

Its subcellular location is the nucleus. In terms of biological role, orphan nuclear receptor. May play a role in modulation of lifespan and immunity. The polypeptide is Nuclear hormone receptor family member nhr-127 (nhr-127) (Caenorhabditis elegans).